We begin with the raw amino-acid sequence, 201 residues long: Putative toxin HigB2 (201 aa).

The protein belongs to the mycobacterial HigB family.

In terms of biological role, putative toxic component of a type II toxin-antitoxin (TA) system. Its cognate antitoxin would be HigA2. This chain is Putative toxin HigB2, found in Mycobacterium tuberculosis (strain ATCC 25618 / H37Rv).